The chain runs to 137 residues: ATP synthase epsilon chain, sodium ion specific (137 aa).

It belongs to the ATPase epsilon chain family. As to quaternary structure, F-type ATPases have 2 components, CF(1) - the catalytic core - and CF(0) - the membrane proton channel. CF(1) has five subunits: alpha(3), beta(3), gamma(1), delta(1), epsilon(1). CF(0) has three main subunits: a, b and c.

It localises to the cell inner membrane. In terms of biological role, produces ATP from ADP in the presence of a sodium gradient across the membrane. The polypeptide is ATP synthase epsilon chain, sodium ion specific (atpC) (Propionigenium modestum).